Reading from the N-terminus, the 748-residue chain is Cytosolic phospholipase A2 (748 aa).

Positions Met1 to Ser178 are phospholipid binding. Ser2 carries the post-translational modification Phosphoserine. The 117-residue stretch at Pro6–Phe122 folds into the C2 domain. Ca(2+)-binding residues include Asp40, Thr41, Asp43, Asn65, Asp93, Ala94, and Asn95. One can recognise a PLA2c domain in the interval Ser140–Asn739. Ser228 acts as the Nucleophile in catalysis. The residue at position 268 (Thr268) is a Phosphothreonine. Residues Lys427–Ser458 are disordered. Phosphoserine occurs at positions 434, 435, and 437. At Ser505 the chain carries Phosphoserine; by MAPK. Ser515 bears the Phosphoserine mark. Lys540 participates in a covalent cross-link: Glycyl lysine isopeptide (Lys-Gly) (interchain with G-Cter in SUMO2). The active-site Proton acceptor is the Asp548. Lys605 participates in a covalent cross-link: Glycyl lysine isopeptide (Lys-Gly) (interchain with G-Cter in SUMO2). 2 positions are modified to phosphoserine: Ser726 and Ser728.

Interacts with KAT5. Phosphorylated at both Ser-505 and Ser-726 in response to mitogenic stimuli. In terms of tissue distribution, expressed in various organs including uterus, kidney, spleen, liver, heart, lung and brain (at protein level).

It localises to the cytoplasm. The protein localises to the golgi apparatus membrane. It is found in the nucleus envelope. The catalysed reaction is a 1,2-diacyl-sn-glycero-3-phosphocholine + H2O = a 1-acyl-sn-glycero-3-phosphocholine + a fatty acid + H(+). It carries out the reaction a 1-O-alkyl-2-acyl-sn-glycero-3-phosphocholine + H2O = a 1-O-alkyl-sn-glycero-3-phosphocholine + a fatty acid + H(+). It catalyses the reaction a 1-acyl-sn-glycero-3-phosphocholine + H2O = sn-glycerol 3-phosphocholine + a fatty acid + H(+). The enzyme catalyses 1-hexadecanoyl-2-(5Z,8Z,11Z,14Z-eicosatetraenoyl)-sn-glycero-3-phosphocholine + H2O = 1-hexadecanoyl-sn-glycero-3-phosphocholine + (5Z,8Z,11Z,14Z)-eicosatetraenoate + H(+). The catalysed reaction is 1,2-di-(5Z,8Z,11Z,14Z-eicosatetraenoyl)-sn-glycero-3-phosphocholine + H2O = 1-(5Z,8Z,11Z,14Z-eicosatetraenoyl)-sn-glycero-3-phosphocholine + (5Z,8Z,11Z,14Z)-eicosatetraenoate + H(+). It carries out the reaction 1-octadecanoyl-2-(5Z,8Z,11Z,14Z-eicosatetraenoyl)-sn-glycero-3-phosphocholine + H2O = 1-octadecanoyl-sn-glycero-3-phosphocholine + (5Z,8Z,11Z,14Z)-eicosatetraenoate + H(+). It catalyses the reaction 1-hexadecanoyl-2-(9Z,12Z-octadecadienoyl)-sn-glycero-3-phosphocholine + H2O = (9Z,12Z)-octadecadienoate + 1-hexadecanoyl-sn-glycero-3-phosphocholine + H(+). The enzyme catalyses 1-octadecanoyl-2-(9Z,12Z,15Z-octadecatrienoyl)-sn-glycero-3-phosphocholine + H2O = (9Z,12Z,15Z)-octadecatrienoate + 1-octadecanoyl-sn-glycero-3-phosphocholine + H(+). The catalysed reaction is 1-(5Z,8Z,11Z,14Z-eicosatetraenoyl)-2-hexadecanoyl-sn-glycero-3-phosphocholine + H2O = 1-(5Z,8Z,11Z,14Z-eicosatetraenoyl)-sn-glycero-3-phosphocholine + hexadecanoate + H(+). It carries out the reaction 1-O-hexadecyl-2-(5Z,8Z,11Z,14Z)-eicosatetraenoyl-sn-glycero-3-phosphocholine + H2O = 1-O-hexadecyl-sn-glycero-3-phosphocholine + (5Z,8Z,11Z,14Z)-eicosatetraenoate + H(+). It catalyses the reaction 1,2-di-(9Z-octadecenoyl)-sn-glycero-3-phospho-(1'-sn-glycerol) + H2O = 1-(9Z-octadecenoyl)-sn-glycero-3-phospho-(1'-sn-glycerol) + (9Z)-octadecenoate + H(+). The enzyme catalyses 1-octadecanoyl-2-(5Z,8Z,11Z,14Z-eicosatetraenoyl)-sn-glycero-3-phosphate + H2O = 1-octadecanoyl-sn-glycero-3-phosphate + (5Z,8Z,11Z,14Z)-eicosatetraenoate + H(+). The catalysed reaction is 1-hexadecanoyl-sn-glycero-3-phosphocholine + H2O = sn-glycerol 3-phosphocholine + hexadecanoate + H(+). It carries out the reaction 2-(prostaglandin E2)-sn-glycero-3-phosphoethanolamine + H2O = sn-glycero-3-phosphoethanolamine + prostaglandin E2 + H(+). It catalyses the reaction 2-[(15S)-hydroxy-(5Z,8Z,11Z,13E)-eicosatetraenoyl]-sn-glycero-3-phosphocholine + H2O = (15S)-hydroxy-(5Z,8Z,11Z,13E)-eicosatetraenoate + sn-glycerol 3-phosphocholine + H(+). The enzyme catalyses 2-[(15R)-hydroxy-(5Z,8Z,11Z,13E)-eicosatetraenoyl]-sn-glycero-3-phosphocholine + H2O = (15R)-hydroxy-(5Z,8Z,11Z,13E)-eicosatetraenoate + sn-glycerol 3-phosphocholine + H(+). The catalysed reaction is 2-(prostaglandin E2)-sn-glycero-3-phosphocholine + H2O = prostaglandin E2 + sn-glycerol 3-phosphocholine + H(+). It carries out the reaction 2-[(11R)-hydroxy-(5Z,8Z,12E,14Z)-eicosatetraenoyl]-sn-glycero-3-phosphocholine + H2O = (11R)-hydroxy-(5Z,8Z,12E,14Z)-eicosatetraenoate + sn-glycerol 3-phosphocholine + H(+). It catalyses the reaction 1-(5Z,8Z,11Z,14Z-eicosatetraenoyl)-2-O-hexadecyl-sn-glycero-3-phosphocholine + H2O = 2-O-hexadecyl-sn-glycero-3-phosphocholine + (5Z,8Z,11Z,14Z)-eicosatetraenoate + H(+). The enzyme catalyses 1-octadecanoyl-2-(5Z,8Z,11Z,14Z-eicosatetraenoyl)-sn-glycero-3-phosphocholine + glycerol = 1-(5Z,8Z,11Z,14Z-eicosatetraenoyl)-glycerol + 1-octadecanoyl-sn-glycero-3-phosphocholine. The catalysed reaction is 1-octadecanoyl-2-(9Z,12Z,15Z-octadecatrienoyl)-sn-glycero-3-phosphocholine + glycerol = 1-(9Z,12Z,15Z-octadecatrienoyl)-glycerol + 1-octadecanoyl-sn-glycero-3-phosphocholine. It participates in membrane lipid metabolism; glycerophospholipid metabolism. Its pathway is lipid metabolism; arachidonate metabolism. The protein operates within lipid metabolism; prostaglandin biosynthesis. It functions in the pathway lipid metabolism; leukotriene B4 biosynthesis. Activated by cytosolic calcium, which is necessary for binding to membrane lipids. Activated by phosphorylation in response to mitogenic stimuli. Stimulated by agonists such as ATP and thrombin. Functionally, has primarily calcium-dependent phospholipase and lysophospholipase activities, with a major role in membrane lipid remodeling and biosynthesis of lipid mediators of the inflammatory response. Plays an important role in embryo implantation and parturition through its ability to trigger prostanoid production. Preferentially hydrolyzes the ester bond of the fatty acyl group attached at sn-2 position of phospholipids (phospholipase A2 activity). Selectively hydrolyzes sn-2 arachidonoyl group from membrane phospholipids, providing the precursor for eicosanoid biosynthesis via the cyclooxygenase pathway. In an alternative pathway of eicosanoid biosynthesis, hydrolyzes sn-2 fatty acyl chain of eicosanoid lysophopholipids to release free bioactive eicosanoids. Hydrolyzes the ester bond of the fatty acyl group attached at sn-1 position of phospholipids (phospholipase A1 activity) only if an ether linkage rather than an ester linkage is present at the sn-2 position. This hydrolysis is not stereospecific. Has calcium-independent phospholipase A2 and lysophospholipase activities in the presence of phosphoinositides. Has O-acyltransferase activity. Catalyzes the transfer of fatty acyl chains from phospholipids to a primary hydroxyl group of glycerol (sn-1 or sn-3), potentially contributing to monoacylglycerol synthesis. In Mus musculus (Mouse), this protein is Cytosolic phospholipase A2 (Pla2g4a).